The primary structure comprises 505 residues: Cytochrome P450 monooxygenase iliC (505 aa).

A helical membrane pass occupies residues 6–26 (LIAQHSLTLTIASSVLLVFLL). Heme is bound at residue cysteine 453.

It belongs to the cytochrome P450 family. Heme serves as cofactor.

The protein resides in the membrane. It catalyses the reaction (3E,5S)-3-[(2E,4E,8S,10E,12Z)-1-hydroxy-4,8-dimethyltetradeca-2,4,10,12-tetraen-1-ylidene]-5-[(4-hydroxyphenyl)methyl]pyrrolidine-2,4-dione + reduced [NADPH--hemoprotein reductase] + O2 = 3-[(2E,4E,8S,10E,12Z)-4,8-dimethyltetradeca-2,4,10,12-tetraenoyl]-4-hydroxy-5-(4-hydroxyphenyl)-1,2-dihydropyridin-2-one + oxidized [NADPH--hemoprotein reductase] + 2 H2O. It functions in the pathway mycotoxin biosynthesis. Its function is as follows. Cytochrome P450 monooxygenase; part of the gene cluster that mediates the biosynthesis of ilicicolin H, a 4-hydroxy-2-pyridonealkaloid that has potent and broad antifungal activities by inhibiting the mitochondrial respiration chain. IliC catalyzes the ring expansion of the tetramate intermediate to the acyclic 2-pyridone intermediate that contains the trans bis-diene chain. The biosynthesis of ilicicolin H starts with formation of the tetramic acid by the hybrid PKS-NRPS synthetase iliA with the partnering trans-enoyl reductase iliB since iliA lacks a designated enoylreductase (ER) domain. The cytochrome P450 monooxygenase iliC then catalyzes the ring expansion of the tetramate to the acyclic 2-pyridone. The pericyclase iliD further converts the acyclic 2-pyridone into 8-epi-ilicicolin H. 8-epi-ilicicolin H might then spontaneously convert to ilicicolin H since ilicicolin H is produced in the absence of the epimerase iliE, in contrast to what was observed for the Talaromyces variabilis ilicolin H biosynthetic pathway. The chain is Cytochrome P450 monooxygenase iliC from Neonectria sp. (strain DH2).